The sequence spans 250 residues: Coproheme decarboxylase (250 aa).

Fe-coproporphyrin III is bound by residues R131, 145 to 149, H172, and Q185; that span reads YPMNK. Y145 is a catalytic residue.

Belongs to the ChdC family. Type 1 subfamily. It depends on Fe-coproporphyrin III as a cofactor.

It carries out the reaction Fe-coproporphyrin III + 2 H2O2 + 2 H(+) = heme b + 2 CO2 + 4 H2O. The enzyme catalyses Fe-coproporphyrin III + H2O2 + H(+) = harderoheme III + CO2 + 2 H2O. The catalysed reaction is harderoheme III + H2O2 + H(+) = heme b + CO2 + 2 H2O. It functions in the pathway porphyrin-containing compound metabolism; protoheme biosynthesis. Its function is as follows. Involved in coproporphyrin-dependent heme b biosynthesis. Catalyzes the decarboxylation of Fe-coproporphyrin III (coproheme) to heme b (protoheme IX), the last step of the pathway. The reaction occurs in a stepwise manner with a three-propionate intermediate. This chain is Coproheme decarboxylase, found in Staphylococcus aureus (strain MRSA252).